The primary structure comprises 627 residues: 1-deoxy-D-xylulose-5-phosphate synthase (627 aa).

Thiamine diphosphate-binding positions include histidine 80 and 121–123 (GHS). Position 152 (aspartate 152) interacts with Mg(2+). Thiamine diphosphate-binding positions include 153–154 (GA), asparagine 181, tyrosine 288, and glutamate 370. Asparagine 181 is a Mg(2+) binding site.

This sequence belongs to the transketolase family. DXPS subfamily. In terms of assembly, homodimer. The cofactor is Mg(2+). Requires thiamine diphosphate as cofactor.

The enzyme catalyses D-glyceraldehyde 3-phosphate + pyruvate + H(+) = 1-deoxy-D-xylulose 5-phosphate + CO2. The protein operates within metabolic intermediate biosynthesis; 1-deoxy-D-xylulose 5-phosphate biosynthesis; 1-deoxy-D-xylulose 5-phosphate from D-glyceraldehyde 3-phosphate and pyruvate: step 1/1. Its function is as follows. Catalyzes the acyloin condensation reaction between C atoms 2 and 3 of pyruvate and glyceraldehyde 3-phosphate to yield 1-deoxy-D-xylulose-5-phosphate (DXP). In Aliivibrio fischeri (strain MJ11) (Vibrio fischeri), this protein is 1-deoxy-D-xylulose-5-phosphate synthase.